Reading from the N-terminus, the 461-residue chain is Deoxyguanosinetriphosphate triphosphohydrolase-like protein (461 aa).

Residues 22–41 (ERFLPDPPREKDNRPPFRRD) form a disordered region. A compositionally biased stretch (basic and acidic residues) spans 24–41 (FLPDPPREKDNRPPFRRD). An HD domain is found at 72–285 (RLTHSLEVAQ…MELADDIAYG (214 aa)).

The protein belongs to the dGTPase family. Type 2 subfamily.

This chain is Deoxyguanosinetriphosphate triphosphohydrolase-like protein, found in Haemophilus influenzae (strain PittGG).